The primary structure comprises 500 residues: Lysine--tRNA ligase (500 aa).

Mg(2+) is bound by residues E410 and E417.

It belongs to the class-II aminoacyl-tRNA synthetase family. Homodimer. Mg(2+) is required as a cofactor.

The protein localises to the cytoplasm. It catalyses the reaction tRNA(Lys) + L-lysine + ATP = L-lysyl-tRNA(Lys) + AMP + diphosphate. The polypeptide is Lysine--tRNA ligase (Shewanella sediminis (strain HAW-EB3)).